Reading from the N-terminus, the 1879-residue chain is Protein TIC 214 (1879 aa).

6 consecutive transmembrane segments (helical) span residues I18 to G38, F64 to L84, P87 to P107, L124 to L144, V172 to I192, and I218 to P238. Disordered regions lie at residues E245–T305 and I586–M702. Composition is skewed to acidic residues over residues A253–T268 and E295–T305. Positions I586–T688 are enriched in low complexity. Residues I691 to P701 show a composition bias toward basic and acidic residues.

This sequence belongs to the TIC214 family. As to quaternary structure, part of the Tic complex.

The protein localises to the plastid. The protein resides in the chloroplast inner membrane. Its function is as follows. Involved in protein precursor import into chloroplasts. May be part of an intermediate translocation complex acting as a protein-conducting channel at the inner envelope. The protein is Protein TIC 214 of Cucumis sativus (Cucumber).